We begin with the raw amino-acid sequence, 730 residues long: Arginine decarboxylase 1B, chloroplastic (730 aa).

Residues methionine 1–proline 37 constitute a chloroplast transit peptide. An N6-(pyridoxal phosphate)lysine modification is found at lysine 157. Residues serine 309, glycine 346, and glutamate 395–arginine 398 each bind pyridoxal 5'-phosphate. Tyrosine 460–alanine 461 lines the substrate pocket. Cysteine 548 serves as the catalytic Proton donor; shared with dimeric partner. Aspartate 549 contributes to the substrate binding site. Tyrosine 590 serves as a coordination point for pyridoxal 5'-phosphate.

Belongs to the Orn/Lys/Arg decarboxylase class-II family. SpeA subfamily. Requires Mg(2+) as cofactor. It depends on pyridoxal 5'-phosphate as a cofactor.

Its subcellular location is the plastid. The protein resides in the chloroplast. It carries out the reaction L-arginine + H(+) = agmatine + CO2. It functions in the pathway alkaloid biosynthesis; nicotine biosynthesis. The protein operates within amine and polyamine biosynthesis; agmatine biosynthesis; agmatine from L-arginine: step 1/1. Its function is as follows. Involved in the biosynthesis of pyridine alkaloid natural products, leading mainly to the production of anabasine, anatabine, nicotine and nornicotine, effective deterrents against herbivores with antiparasitic and pesticide properties (neurotoxins); nornicotine serves as the precursor in the synthesis of the carcinogen compound N'-nitrosonornicotine (NNN). Required for the biosynthesis of putrescine. Catalyzes the first step of polyamine (PA) biosynthesis to produce putrescine from arginine. In Nicotiana tabacum (Common tobacco), this protein is Arginine decarboxylase 1B, chloroplastic.